A 342-amino-acid chain; its full sequence is N-acetyl-gamma-glutamyl-phosphate reductase (342 aa).

Cys149 is a catalytic residue.

This sequence belongs to the NAGSA dehydrogenase family. Type 1 subfamily.

It localises to the cytoplasm. It catalyses the reaction N-acetyl-L-glutamate 5-semialdehyde + phosphate + NADP(+) = N-acetyl-L-glutamyl 5-phosphate + NADPH + H(+). It functions in the pathway amino-acid biosynthesis; L-arginine biosynthesis; N(2)-acetyl-L-ornithine from L-glutamate: step 3/4. Functionally, catalyzes the NADPH-dependent reduction of N-acetyl-5-glutamyl phosphate to yield N-acetyl-L-glutamate 5-semialdehyde. This chain is N-acetyl-gamma-glutamyl-phosphate reductase, found in Rhodobacter capsulatus (strain ATCC BAA-309 / NBRC 16581 / SB1003).